The primary structure comprises 272 residues: Phosphoglycolate phosphatase (272 aa).

D19 serves as the catalytic Nucleophile. Residues D19, D21, and D182 each contribute to the Mg(2+) site.

The protein belongs to the HAD-like hydrolase superfamily. CbbY/CbbZ/Gph/YieH family. Mg(2+) serves as cofactor.

The catalysed reaction is 2-phosphoglycolate + H2O = glycolate + phosphate. It participates in organic acid metabolism; glycolate biosynthesis; glycolate from 2-phosphoglycolate: step 1/1. Its function is as follows. Specifically catalyzes the dephosphorylation of 2-phosphoglycolate. Is involved in the dissimilation of the intracellular 2-phosphoglycolate formed during the DNA repair of 3'-phosphoglycolate ends, a major class of DNA lesions induced by oxidative stress. In Pseudomonas syringae pv. tomato (strain ATCC BAA-871 / DC3000), this protein is Phosphoglycolate phosphatase.